Reading from the N-terminus, the 215-residue chain is Polysialic acid O-acetyltransferase (215 aa).

Acetyl-CoA-binding positions include 119–121 (DMH), R148, K154, S166, 171–172 (YK), and K190.

The protein belongs to the transferase hexapeptide repeat family. In terms of assembly, homotrimer.

It carries out the reaction [(2-&gt;6)-alpha-D-glucosyl-(1-&gt;4)-N-acetyl-alpha-D-neuraminosyl](n) + n acetyl-CoA = [(2-&gt;6)-alpha-D-glucosyl-(1-&gt;4)-N,7-O-diacetyl-alpha-D-neuraminosyl](n) + n CoA. The catalysed reaction is [(2-&gt;6)-alpha-D-glucosyl-(1-&gt;4)-N-acetyl-alpha-D-neuraminosyl](n) + n acetyl-CoA = [(2-&gt;6)-alpha-D-glucosyl-(1-&gt;4)-N,O(9)-diacetyl-alpha-D-neuraminosyl](n) + n CoA. Its function is as follows. Catalyzes the O-acetylation of capsular polymeric sialic acid consisting of polymers of (2-&gt;6)-alpha-D-glucosyl-(1-&gt;4)-N-acetyl-alpha-D-neuraminosyl residues. Shows high substrate specificity toward polymers of sialic acid that contains a large number of residues. The sequence is that of Polysialic acid O-acetyltransferase from Neisseria meningitidis.